The sequence spans 92 residues: Alpha-defensin 25 (92 aa).

An N-terminal signal peptide occupies residues 1–19 (MKTLVLLSALALLAFQVQA). The propeptide occupies 20-57 (DPIQNRDEESKIDEQPGKEDQAVSVSFGDPEGSSLQEE). Over residues 24 to 40 (NRDEESKIDEQPGKEDQ) the composition is skewed to basic and acidic residues. A disordered region spans residues 24–53 (NRDEESKIDEQPGKEDQAVSVSFGDPEGSS). Cystine bridges form between cysteine 63–cysteine 92, cysteine 65–cysteine 80, and cysteine 70–cysteine 91.

This sequence belongs to the alpha-defensin family.

The protein localises to the secreted. Functionally, may have microbicidal activities. The protein is Alpha-defensin 25 (Defa25) of Mus musculus (Mouse).